The chain runs to 290 residues: Pyridoxal kinase PdxY (290 aa).

Ser-14 contacts substrate. The ATP site is built by Asp-116 and Glu-153. Asp-226 contributes to the substrate binding site.

This sequence belongs to the pyridoxine kinase family. PdxY subfamily. As to quaternary structure, homodimer. The cofactor is Mg(2+).

The enzyme catalyses pyridoxal + ATP = pyridoxal 5'-phosphate + ADP + H(+). It participates in cofactor metabolism; pyridoxal 5'-phosphate salvage; pyridoxal 5'-phosphate from pyridoxal: step 1/1. Functionally, pyridoxal kinase involved in the salvage pathway of pyridoxal 5'-phosphate (PLP). Catalyzes the phosphorylation of pyridoxal to PLP. This chain is Pyridoxal kinase PdxY, found in Rubrobacter xylanophilus (strain DSM 9941 / JCM 11954 / NBRC 16129 / PRD-1).